A 543-amino-acid chain; its full sequence is Chaperonin GroEL (543 aa).

Residues threonine 30 to proline 33, lysine 51, aspartate 87 to threonine 91, glycine 415, aspartate 480 to alanine 482, and aspartate 496 contribute to the ATP site.

Belongs to the chaperonin (HSP60) family. In terms of assembly, forms a cylinder of 14 subunits composed of two heptameric rings stacked back-to-back. Interacts with the co-chaperonin GroES.

Its subcellular location is the cytoplasm. It carries out the reaction ATP + H2O + a folded polypeptide = ADP + phosphate + an unfolded polypeptide.. In terms of biological role, together with its co-chaperonin GroES, plays an essential role in assisting protein folding. The GroEL-GroES system forms a nano-cage that allows encapsulation of the non-native substrate proteins and provides a physical environment optimized to promote and accelerate protein folding. In Hydrogenobaculum sp. (strain Y04AAS1), this protein is Chaperonin GroEL.